We begin with the raw amino-acid sequence, 943 residues long: Isoleucine--tRNA ligase (943 aa).

Positions 58–68 (PYANGTIHIGH) match the 'HIGH' region motif. Residue E567 coordinates L-isoleucyl-5'-AMP. Positions 608-612 (KMSKS) match the 'KMSKS' region motif. K611 lines the ATP pocket. Zn(2+) contacts are provided by C906, C909, C926, and C929.

Belongs to the class-I aminoacyl-tRNA synthetase family. IleS type 1 subfamily. In terms of assembly, monomer. The cofactor is Zn(2+).

It localises to the cytoplasm. It catalyses the reaction tRNA(Ile) + L-isoleucine + ATP = L-isoleucyl-tRNA(Ile) + AMP + diphosphate. Catalyzes the attachment of isoleucine to tRNA(Ile). As IleRS can inadvertently accommodate and process structurally similar amino acids such as valine, to avoid such errors it has two additional distinct tRNA(Ile)-dependent editing activities. One activity is designated as 'pretransfer' editing and involves the hydrolysis of activated Val-AMP. The other activity is designated 'posttransfer' editing and involves deacylation of mischarged Val-tRNA(Ile). The sequence is that of Isoleucine--tRNA ligase from Pseudomonas syringae pv. tomato (strain ATCC BAA-871 / DC3000).